Here is a 352-residue protein sequence, read N- to C-terminus: Quinolinate synthase (352 aa).

Iminosuccinate contacts are provided by His-48 and Ser-69. Residue Cys-114 participates in [4Fe-4S] cluster binding. Residues 140–142 (YAN) and Ser-157 contribute to the iminosuccinate site. Residue Cys-201 coordinates [4Fe-4S] cluster. Iminosuccinate is bound by residues 227-229 (HPE) and Thr-244. Cys-298 is a binding site for [4Fe-4S] cluster.

Belongs to the quinolinate synthase family. Type 1 subfamily. It depends on [4Fe-4S] cluster as a cofactor.

Its subcellular location is the cytoplasm. It catalyses the reaction iminosuccinate + dihydroxyacetone phosphate = quinolinate + phosphate + 2 H2O + H(+). The protein operates within cofactor biosynthesis; NAD(+) biosynthesis; quinolinate from iminoaspartate: step 1/1. Its function is as follows. Catalyzes the condensation of iminoaspartate with dihydroxyacetone phosphate to form quinolinate. The sequence is that of Quinolinate synthase from Ectopseudomonas mendocina (strain ymp) (Pseudomonas mendocina).